The following is a 355-amino-acid chain: tRNA-specific 2-thiouridylase MnmA (355 aa).

ATP-binding positions include Gly-7–Ser-14 and Leu-33. The active-site Nucleophile is Cys-94. Cysteines 94 and 193 form a disulfide. Gly-119 is an ATP binding site. The tract at residues Lys-143 to Gln-145 is interaction with tRNA. Cys-193 acts as the Cysteine persulfide intermediate in catalysis. Residues Arg-298–Tyr-299 form an interaction with tRNA region.

It belongs to the MnmA/TRMU family.

The protein localises to the cytoplasm. The catalysed reaction is S-sulfanyl-L-cysteinyl-[protein] + uridine(34) in tRNA + AH2 + ATP = 2-thiouridine(34) in tRNA + L-cysteinyl-[protein] + A + AMP + diphosphate + H(+). Its function is as follows. Catalyzes the 2-thiolation of uridine at the wobble position (U34) of tRNA, leading to the formation of s(2)U34. This Acaryochloris marina (strain MBIC 11017) protein is tRNA-specific 2-thiouridylase MnmA.